The chain runs to 141 residues: Large ribosomal subunit protein uL11 (141 aa).

It belongs to the universal ribosomal protein uL11 family. Part of the ribosomal stalk of the 50S ribosomal subunit. Interacts with L10 and the large rRNA to form the base of the stalk. L10 forms an elongated spine to which L12 dimers bind in a sequential fashion forming a multimeric L10(L12)X complex. One or more lysine residues are methylated.

In terms of biological role, forms part of the ribosomal stalk which helps the ribosome interact with GTP-bound translation factors. This chain is Large ribosomal subunit protein uL11, found in Clostridium novyi (strain NT).